Here is a 299-residue protein sequence, read N- to C-terminus: ATP phosphoribosyltransferase (299 aa).

The protein belongs to the ATP phosphoribosyltransferase family. Long subfamily. Mg(2+) is required as a cofactor.

The protein localises to the cytoplasm. It carries out the reaction 1-(5-phospho-beta-D-ribosyl)-ATP + diphosphate = 5-phospho-alpha-D-ribose 1-diphosphate + ATP. The protein operates within amino-acid biosynthesis; L-histidine biosynthesis; L-histidine from 5-phospho-alpha-D-ribose 1-diphosphate: step 1/9. Its activity is regulated as follows. Feedback inhibited by histidine. Its function is as follows. Catalyzes the condensation of ATP and 5-phosphoribose 1-diphosphate to form N'-(5'-phosphoribosyl)-ATP (PR-ATP). Has a crucial role in the pathway because the rate of histidine biosynthesis seems to be controlled primarily by regulation of HisG enzymatic activity. The sequence is that of ATP phosphoribosyltransferase from Campylobacter jejuni subsp. doylei (strain ATCC BAA-1458 / RM4099 / 269.97).